The sequence spans 381 residues: Periphilin-1 (381 aa).

Basic and acidic residues-rich tracts occupy residues 1–28, 39–65, and 79–121; these read MWSE…DGYH, PLLD…GYSR, and RSFS…DGFR. Disordered regions lie at residues 1–65 and 79–260; these read MWSE…GYSR and RSFS…KSDE. Residues 117-123 carry the Nuclear localization signal motif; the sequence is RDGFRRK. K123 participates in a covalent cross-link: Glycyl lysine isopeptide (Lys-Gly) (interchain with G-Cter in SUMO2). Phosphoserine occurs at positions 124, 128, 147, and 154. The segment covering 130–156 has biased composition (basic and acidic residues); that stretch reads YSRDRSPHKRDAPFFRESPVGRKDSPH. The span at 157–168 shows a compositional bias: low complexity; the sequence is SRSGSSVSSRSY. Basic residues predominate over residues 175-187; the sequence is THSFHQSQHRKSS. Residue S181 is modified to Phosphoserine. Residue K194 forms a Glycyl lysine isopeptide (Lys-Gly) (interchain with G-Cter in SUMO2) linkage. Residues 195–208 are compositionally biased toward basic and acidic residues; sequence RQNEAIRGRGKERS. Residue S211 is modified to Phosphoserine. Residue K213 forms a Glycyl lysine isopeptide (Lys-Gly) (interchain with G-Cter in SUMO2) linkage. A phosphoserine mark is found at S215 and S219. Residues 217 to 230 show a composition bias toward low complexity; that stretch reads DASPSSSSAVASSK. Positions 231 to 260 are enriched in basic and acidic residues; sequence ALDKPSRLTEKELAEAESKWANETLEKSDE. Residue K241 forms a Glycyl lysine isopeptide (Lys-Gly) (interchain with G-Cter in SUMO2) linkage. Residue K249 is modified to N6-acetyllysine; alternate. A Glycyl lysine isopeptide (Lys-Gly) (interchain with G-Cter in SUMO2); alternate cross-link involves residue K249. At S339 the chain carries Phosphoserine. A Glycyl lysine isopeptide (Lys-Gly) (interchain with G-Cter in SUMO2) cross-link involves residue K342.

As to quaternary structure, homodimer. Component of the HUSH complex; at least composed of TASOR, PPHLN1 and MPHOSPH8. Interacts with SIN3A and HDAC1. May interact with PPL. As to expression, ubiquitously expressed. Strong expression in the developing somites and limbs, the embryonic nervous system and the adult brain.

Its subcellular location is the nucleus. The protein localises to the cytoplasm. The protein resides in the chromosome. Component of the HUSH complex, a multiprotein complex that mediates epigenetic repression. The HUSH complex is recruited to genomic loci rich in H3K9me3 and is probably required to maintain transcriptional silencing by promoting recruitment of SETDB1, a histone methyltransferase that mediates further deposition of H3K9me3. In the HUSH complex, contributes to the maintenance of the complex at chromatin. Acts as a transcriptional corepressor and regulates the cell cycle, probably via the HUSH complex. The HUSH complex is also involved in the silencing of unintegrated retroviral DNA: some part of the retroviral DNA formed immediately after infection remains unintegrated in the host genome and is transcriptionally repressed. May be involved in epithelial differentiation by contributing to epidermal integrity and barrier formation. The chain is Periphilin-1 from Mus musculus (Mouse).